A 728-amino-acid polypeptide reads, in one-letter code: Polyribonucleotide nucleotidyltransferase (728 aa).

Mg(2+)-binding residues include D513 and D519. The KH domain maps to 580 to 640; it reads PKVKMILIKP…EIVDLTVTYI (61 aa). Residues 650–724 form the S1 motif domain; it reads ENVYEVKILR…ERGQIDLSKK (75 aa).

It belongs to the polyribonucleotide nucleotidyltransferase family. Mg(2+) is required as a cofactor.

The protein resides in the cytoplasm. It catalyses the reaction RNA(n+1) + phosphate = RNA(n) + a ribonucleoside 5'-diphosphate. Functionally, involved in mRNA degradation. Catalyzes the phosphorolysis of single-stranded polyribonucleotides processively in the 3'- to 5'-direction. The protein is Polyribonucleotide nucleotidyltransferase of Phytoplasma mali (strain AT).